The primary structure comprises 858 residues: Elongation factor 2 (858 aa).

Residues 17 to 362 (ANIRNMSVIA…MITIHLPSPV (346 aa)) enclose the tr-type G domain. 26–33 (AHVDHGKS) is a GTP binding site. Residue threonine 54 is modified to Phosphothreonine. Threonine 57 is subject to Phosphothreonine; by EEF2K. Threonine 59 bears the Phosphothreonine mark. Lysine 152 carries the N6-succinyllysine modification. Residues 158–161 (NKMD) and 216–218 (SGL) contribute to the GTP site. Residue lysine 235 is modified to N6-acetyllysine. N6-acetyllysine; alternate is present on lysine 239. Lysine 239 is covalently cross-linked (Glycyl lysine isopeptide (Lys-Gly) (interchain with G-Cter in SUMO1); alternate). Tyrosine 265 carries the post-translational modification Phosphotyrosine; by CSK. Lysine 272 bears the N6-acetyllysine; alternate mark. Position 272 is an N6-succinyllysine; alternate (lysine 272). Lysine 275 carries the N6-acetyllysine modification. Lysine 322 is covalently cross-linked (Glycyl lysine isopeptide (Lys-Gly) (interchain with G-Cter in SUMO)). Serine 325 is modified (phosphoserine). Tyrosine 373 bears the Phosphotyrosine; by CSK mark. Threonine 435 is subject to Phosphothreonine. Residues lysine 439 and lysine 445 each carry the N6-acetyllysine modification. Position 502 is a phosphoserine (serine 502). The residue at position 525 (lysine 525) is an N6,N6,N6-trimethyllysine; by EEF2KMT. Lysine 529 participates in a covalent cross-link: Glycyl lysine isopeptide (Lys-Gly) (interchain with G-Cter in SUMO). Residue lysine 572 is modified to N6-succinyllysine. Serine 595 carries the phosphoserine; by CDK2 modification. Lysine 619 is subject to N6-acetyllysine. A (Microbial infection) ADP-ribosyldiphthamide modification is found at histidine 715. The residue at position 715 (histidine 715) is a Diphthamide.

This sequence belongs to the TRAFAC class translation factor GTPase superfamily. Classic translation factor GTPase family. EF-G/EF-2 subfamily. As to quaternary structure, binds to 80S ribosomes. Actively translating ribosomes show mutually exclusive binding of eIF5a (EIF5A or EIF5A2) and EEF2/eEF2. Interacts with SERBP1; interaction sequesters EEF2/eEF2 at the A-site of the ribosome, thereby blocking the interaction sites of the mRNA-tRNA complex, promoting ribosome stabilization and hibernation. Interacts with HABP4; interaction takes place at the A-site of hibernating ribosomes and promotes ribosome stabilization. Component of the mRNA surveillance SURF complex, at least composed of ERF1, ERF3 (ERF3A or ERF3B), EEF2, UPF1/RENT1, SMG1, SMG8 and SMG9. Interacts with RBPMS2. In terms of processing, phosphorylation by EF-2 kinase completely inactivates EF-2; it requires prior phosphorylation by CDK2 at Ser-595 during mitotic prometaphase. Phosphorylation by CSK promotes SUMOylation, proteolytic cleavage, and nuclear translocation if the C-terminal fragment. Diphthamide is 2-[3-carboxyamido-3-(trimethyl-ammonio)propyl]histidine. Post-translationally, (Microbial infection) Diphthamide can be ADP-ribosylated by diphtheria toxin and by Pseudomonas exotoxin A, thus arresting protein synthesis. In terms of processing, ISGylated. Proteolytically processed at two sites following phosphorylation by CSK. Post-translationally, SUMOylated following phosphorylation by CSK, promotes proteolytic cleavage.

It is found in the cytoplasm. It localises to the nucleus. It catalyses the reaction GTP + H2O = GDP + phosphate + H(+). In terms of biological role, catalyzes the GTP-dependent ribosomal translocation step during translation elongation. During this step, the ribosome changes from the pre-translocational (PRE) to the post-translocational (POST) state as the newly formed A-site-bound peptidyl-tRNA and P-site-bound deacylated tRNA move to the P and E sites, respectively. Catalyzes the coordinated movement of the two tRNA molecules, the mRNA and conformational changes in the ribosome. In Cricetulus griseus (Chinese hamster), this protein is Elongation factor 2 (EEF2).